Reading from the N-terminus, the 542-residue chain is Trans-alpha-bergamotene synthase (542 aa).

Mg(2+)-binding residues include aspartate 295, aspartate 299, aspartate 439, threonine 443, and glutamate 447. A DDXXD motif motif is present at residues 295–299 (DDFYD).

This sequence belongs to the terpene synthase family. It depends on Mg(2+) as a cofactor.

It catalyses the reaction (2E,6E)-farnesyl diphosphate = (1S,5S,6R)-alpha-bergamotene + diphosphate. The protein operates within secondary metabolite biosynthesis; terpenoid biosynthesis. In terms of biological role, sesquiterpene synthase converting farnesyl diphosphate to trans-alpha-bergamotene as the major product. This Phyla dulcis (Aztec sweet herb) protein is Trans-alpha-bergamotene synthase.